The primary structure comprises 202 residues: LexA repressor (202 aa).

Positions 28–48 (RAEIAQRLGFRSPNAAEEHLK) form a DNA-binding region, H-T-H motif. Residues S119 and K156 each act as for autocatalytic cleavage activity in the active site.

It belongs to the peptidase S24 family. In terms of assembly, homodimer.

It catalyses the reaction Hydrolysis of Ala-|-Gly bond in repressor LexA.. In terms of biological role, represses a number of genes involved in the response to DNA damage (SOS response), including recA and lexA. Binds to the 16 bp palindromic sequence 5'-CTGTATATATATACAG-3'. In the presence of single-stranded DNA, RecA interacts with LexA causing an autocatalytic cleavage which disrupts the DNA-binding part of LexA, leading to derepression of the SOS regulon and eventually DNA repair. The sequence is that of LexA repressor from Yersinia pseudotuberculosis serotype O:1b (strain IP 31758).